Reading from the N-terminus, the 502-residue chain is Maturase K (502 aa).

This sequence belongs to the intron maturase 2 family. MatK subfamily.

The protein localises to the plastid. It is found in the chloroplast. Usually encoded in the trnK tRNA gene intron. Probably assists in splicing its own and other chloroplast group II introns. This Theobroma cacao (Cacao) protein is Maturase K.